The primary structure comprises 482 residues: Transcription initiation factor IIE subunit alpha (482 aa).

In terms of domain architecture, HTH TFE/IIEalpha-type spans valine 9–lysine 99. The segment at cysteine 124–cysteine 152 adopts a C4-type zinc-finger fold. Positions arginine 274 to lysine 286 are enriched in basic and acidic residues. Disordered stretches follow at residues arginine 274–lysine 295 and alanine 321–valine 482. The segment covering alanine 321–glutamate 345 has biased composition (polar residues). Positions glutamate 374 to aspartate 401 are enriched in acidic residues. Residues threonine 419–aspartate 432 are compositionally biased toward polar residues. Over residues valine 433–aspartate 444 the composition is skewed to basic and acidic residues. Acidic residues predominate over residues glycine 464 to valine 482.

It belongs to the TFIIE alpha subunit family. In terms of assembly, TFIIE is a tetramer of two alpha (TFA1) and two beta (TFA2) subunits.

The protein localises to the nucleus. Recruits TFIIH to the initiation complex and stimulates the RNA polymerase II C-terminal domain kinase and DNA-dependent ATPase activities of TFIIH. Both TFIIH and TFIIE are required for promoter clearance by RNA polymerase. The protein is Transcription initiation factor IIE subunit alpha (TFA1) of Saccharomyces cerevisiae (strain ATCC 204508 / S288c) (Baker's yeast).